Here is a 459-residue protein sequence, read N- to C-terminus: Putrescine aminotransferase (459 aa).

Pyridoxal 5'-phosphate contacts are provided by residues 150 to 151 (GT) and Q274. Residue K300 is modified to N6-(pyridoxal phosphate)lysine. Position 332 (T332) interacts with pyridoxal 5'-phosphate.

The protein belongs to the class-III pyridoxal-phosphate-dependent aminotransferase family. Putrescine aminotransferase subfamily. Requires pyridoxal 5'-phosphate as cofactor.

The catalysed reaction is an alkane-alpha,omega-diamine + 2-oxoglutarate = an omega-aminoaldehyde + L-glutamate. The enzyme catalyses putrescine + 2-oxoglutarate = 1-pyrroline + L-glutamate + H2O. It carries out the reaction cadaverine + 2-oxoglutarate = 5-aminopentanal + L-glutamate. It functions in the pathway amine and polyamine degradation; putrescine degradation; 4-aminobutanal from putrescine (transaminase route): step 1/1. Functionally, catalyzes the aminotransferase reaction from putrescine to 2-oxoglutarate, leading to glutamate and 4-aminobutanal, which spontaneously cyclizes to form 1-pyrroline. This is the first step in one of two pathways for putrescine degradation, where putrescine is converted into 4-aminobutanoate (gamma-aminobutyrate or GABA) via 4-aminobutanal. Also functions as a cadaverine transaminase in a a L-lysine degradation pathway to succinate that proceeds via cadaverine, glutarate and L-2-hydroxyglutarate. This Escherichia coli (strain SMS-3-5 / SECEC) protein is Putrescine aminotransferase.